The following is a 250-amino-acid chain: Small ribosomal subunit protein uS3 (250 aa).

The region spanning 16-85 is the KH type-2 domain; sequence IDEYLEKELE…NPQIEVKEVS (70 aa).

It belongs to the universal ribosomal protein uS3 family. As to quaternary structure, part of the 30S ribosomal subunit.

Binds the lower part of the 30S subunit head. In Methanobrevibacter smithii (strain ATCC 35061 / DSM 861 / OCM 144 / PS), this protein is Small ribosomal subunit protein uS3.